Here is a 134-residue protein sequence, read N- to C-terminus: Small ribosomal subunit protein uS8c (134 aa).

It belongs to the universal ribosomal protein uS8 family. As to quaternary structure, part of the 30S ribosomal subunit.

It is found in the plastid. It localises to the chloroplast. Its function is as follows. One of the primary rRNA binding proteins, it binds directly to 16S rRNA central domain where it helps coordinate assembly of the platform of the 30S subunit. The polypeptide is Small ribosomal subunit protein uS8c (rps8) (Lepidium virginicum (Virginia pepperweed)).